Here is a 282-residue protein sequence, read N- to C-terminus: tRNA uridine(34) hydroxylase (282 aa).

A Rhodanese domain is found at 128 to 222 (EGRPVVMLDT…YFEEVGGSHY (95 aa)). Catalysis depends on Cys-182, which acts as the Cysteine persulfide intermediate.

The protein belongs to the TrhO family.

It carries out the reaction uridine(34) in tRNA + AH2 + O2 = 5-hydroxyuridine(34) in tRNA + A + H2O. Its function is as follows. Catalyzes oxygen-dependent 5-hydroxyuridine (ho5U) modification at position 34 in tRNAs. This chain is tRNA uridine(34) hydroxylase, found in Cupriavidus taiwanensis (strain DSM 17343 / BCRC 17206 / CCUG 44338 / CIP 107171 / LMG 19424 / R1) (Ralstonia taiwanensis (strain LMG 19424)).